A 450-amino-acid chain; its full sequence is Signal recognition particle protein (450 aa).

GTP contacts are provided by residues 107-114, 190-194, and 248-251; these read GLQGVGKT, DTAGR, and TKTD.

The protein belongs to the GTP-binding SRP family. SRP54 subfamily. In terms of assembly, part of the signal recognition particle protein translocation system, which is composed of SRP and FtsY. SRP is a ribonucleoprotein composed of Ffh and a 4.5S RNA molecule.

The protein localises to the cytoplasm. It catalyses the reaction GTP + H2O = GDP + phosphate + H(+). In terms of biological role, involved in targeting and insertion of nascent membrane proteins into the cytoplasmic membrane. Binds to the hydrophobic signal sequence of the ribosome-nascent chain (RNC) as it emerges from the ribosomes. The SRP-RNC complex is then targeted to the cytoplasmic membrane where it interacts with the SRP receptor FtsY. Interaction with FtsY leads to the transfer of the RNC complex to the Sec translocase for insertion into the membrane, the hydrolysis of GTP by both Ffh and FtsY, and the dissociation of the SRP-FtsY complex into the individual components. The protein is Signal recognition particle protein of Buchnera aphidicola subsp. Schizaphis graminum (strain Sg).